Consider the following 980-residue polypeptide: Ankycorbin (980 aa).

Position 1 is an N-acetylmethionine (methionine 1). Serine 11 is modified (phosphoserine). ANK repeat units follow at residues 18-51, 52-81, 85-114, 118-147, 151-180, 184-213, and 217-247; these read KNDD…KHDS, EGKT…DVTA, TGHS…PAES, SGKT…PINL, DGNI…DVNS, SGRT…DLNL, and LGYN…DADL. The span at 247–259 shows a compositional bias: basic and acidic residues; that stretch reads LKTPTKPKQHDQV. The segment at 247-301 is disordered; sequence LKTPTKPKQHDQVSKISSERSGTPKKRKAPPPPISPTQLSDVSSPRSITSTPLSG. Position 249 is a phosphothreonine (threonine 249). Residues 270 to 276 carry the Nuclear localization signal motif; that stretch reads PKKRKAP. Serine 281, serine 286, and serine 293 each carry phosphoserine. The span at 282 to 299 shows a compositional bias: polar residues; it reads PTQLSDVSSPRSITSTPL. 2 positions are modified to phosphothreonine: threonine 295 and threonine 297. A phosphoserine mark is found at serine 300, serine 304, serine 318, serine 327, serine 329, serine 340, serine 341, serine 350, serine 358, serine 419, serine 512, serine 515, serine 667, and serine 915. Residues 349-374 are a coiled coil; that stretch reads LSLLQAKVASLTLHNKELQDKLQAKS. Residues 387–423 are disordered; the sequence is YHSTQTDLGPSLGKPGETSPPDSKSSPSVLIHSLGKS. A coiled-coil region spans residues 425 to 947; it reads TDNDVRIQQL…QHQEVISVYR (523 aa).

In terms of assembly, interacts with PALLD. Associates with actin. However, does not bind F-actin directly. Highly expressed in placenta, muscle, kidney and testis. Moderately expressed in heart, brain, lung, liver and intestine. Isoform 2 is widely expressed and expressed in fetal and adult testes, and spermatozoa.

The protein localises to the cytoplasm. It is found in the cytoskeleton. The protein resides in the stress fiber. It localises to the cell cortex. Its subcellular location is the cell junction. The protein localises to the nucleus. Functionally, plays a role in actin regulation at the ectoplasmic specialization, a type of cell junction specific to testis. Important for establishment of sperm polarity and normal spermatid adhesion. May also promote integrity of Sertoli cell tight junctions at the blood-testis barrier. The chain is Ankycorbin (RAI14) from Homo sapiens (Human).